The chain runs to 151 residues: Protein SprT-like (151 aa).

A SprT-like domain is found at 6-147 (LQRMVENLSE…GHCNGKLRMK (142 aa)). Histidine 67 is a binding site for Zn(2+). The active site involves glutamate 68. Histidine 71 is a binding site for Zn(2+).

It belongs to the SprT family. It depends on Zn(2+) as a cofactor.

The protein localises to the cytoplasm. The sequence is that of Protein SprT-like from Staphylococcus aureus (strain Mu3 / ATCC 700698).